A 295-amino-acid polypeptide reads, in one-letter code: MSLGALISESRNPATMELDKLSTLAMLTCINDEDRKVPDAIRLVLPAVAQAVDLAADALKQGGRLIYLGAGTSGRLGVLDASECPPTFGVPHGMVIGLIAGGPGALLKAVEGAEDDIALGMRDLQDLQLTATDMVVGLAASGRTPYVIGALRYARELGCPTAAISCNPDSPIAQEAQVAISPVVGPEALTGSTRMKSGTAQKLVLNMLSTGAMVKLGKVYQNLMVDVKATNVKLVDRACRIVVEATGVSRAEAEHALRQTDFEVKPAILMLLKGVSAEQARQDLRQHHGYLRAAL.

Positions 55–218 constitute an SIS domain; the sequence is AADALKQGGR…STGAMVKLGK (164 aa). E83 serves as the catalytic Proton donor. Residue E114 is part of the active site.

Belongs to the GCKR-like family. MurNAc-6-P etherase subfamily. Homodimer.

The enzyme catalyses N-acetyl-D-muramate 6-phosphate + H2O = N-acetyl-D-glucosamine 6-phosphate + (R)-lactate. The protein operates within amino-sugar metabolism; 1,6-anhydro-N-acetylmuramate degradation. It participates in amino-sugar metabolism; N-acetylmuramate degradation. It functions in the pathway cell wall biogenesis; peptidoglycan recycling. Its function is as follows. Specifically catalyzes the cleavage of the D-lactyl ether substituent of MurNAc 6-phosphate, producing GlcNAc 6-phosphate and D-lactate. Together with AnmK, is also required for the utilization of anhydro-N-acetylmuramic acid (anhMurNAc) either imported from the medium or derived from its own cell wall murein, and thus plays a role in cell wall recycling. In Yersinia pseudotuberculosis serotype O:1b (strain IP 31758), this protein is N-acetylmuramic acid 6-phosphate etherase.